We begin with the raw amino-acid sequence, 315 residues long: PIH1 domain-containing protein 2 (315 aa).

The protein belongs to the PIH1 family.

The protein is PIH1 domain-containing protein 2 (PIH1D2) of Homo sapiens (Human).